The primary structure comprises 387 residues: 1-deoxy-D-xylulose 5-phosphate reductoisomerase (387 aa).

The NADPH site is built by Thr-11, Gly-12, Ser-13, Ile-14, Gly-37, Arg-38, Asn-39, and Asn-125. A 1-deoxy-D-xylulose 5-phosphate-binding site is contributed by Lys-126. An NADPH-binding site is contributed by Glu-127. Asp-151 lines the Mn(2+) pocket. Positions 152, 153, 177, and 200 each coordinate 1-deoxy-D-xylulose 5-phosphate. Glu-153 is a binding site for Mn(2+). Gly-206 is an NADPH binding site. Positions 213, 218, 219, and 222 each coordinate 1-deoxy-D-xylulose 5-phosphate. Mn(2+) is bound at residue Glu-222.

Belongs to the DXR family. Mg(2+) is required as a cofactor. Mn(2+) serves as cofactor.

It catalyses the reaction 2-C-methyl-D-erythritol 4-phosphate + NADP(+) = 1-deoxy-D-xylulose 5-phosphate + NADPH + H(+). It functions in the pathway isoprenoid biosynthesis; isopentenyl diphosphate biosynthesis via DXP pathway; isopentenyl diphosphate from 1-deoxy-D-xylulose 5-phosphate: step 1/6. Catalyzes the NADPH-dependent rearrangement and reduction of 1-deoxy-D-xylulose-5-phosphate (DXP) to 2-C-methyl-D-erythritol 4-phosphate (MEP). The protein is 1-deoxy-D-xylulose 5-phosphate reductoisomerase of Desulforamulus reducens (strain ATCC BAA-1160 / DSM 100696 / MI-1) (Desulfotomaculum reducens).